The sequence spans 1146 residues: Killer toxin subunits alpha/beta (1146 aa).

The N-terminal stretch at 1–17 (MNIFYIFLFLLSFVQGL) is a signal peptide. Residues 18–29 (EHTHRRGSLVKR) constitute a propeptide that is removed on maturation. 2 LysM domains span residues 205 to 234 (ADQSGINGESLQGYNPNLDFSKLSAGQPIC) and 254 to 303 (KTYK…NLCV). Residues 316 to 372 (IAECGPLAPGEKYNAKCPLNACCSEFGFCGLTKDYCDKKSSTTGAPGTDGCFSNCGY) enclose the Chitin-binding type-1 domain. 4 disulfide bridges follow: Cys319/Cys338, Cys332/Cys344, Cys337/Cys351, and Cys366/Cys370. The region spanning 383-735 (FKKIAYWLDA…DDTEDPFDEE (353 aa)) is the GH18 domain. Chitin contacts are provided by residues Ile424 and 447–450 (GGWD). The Proton donor role is filled by Glu495. Residues Tyr496, 562 to 565 (MTYD), and Trp707 each bind chitin. N-linked (GlcNAc...) asparagine glycosylation is found at Asn771, Asn858, Asn868, Asn876, and Asn1117.

This sequence belongs to the glycosyl hydrolase 18 family. As to quaternary structure, the killer toxin is composed of three subunits: alpha, beta and gamma. In terms of processing, RF2 is potentially split by membrane-bound basic amino acid-specific peptidase to yield the alpha and beta subunits.

It catalyses the reaction Random endo-hydrolysis of N-acetyl-beta-D-glucosaminide (1-&gt;4)-beta-linkages in chitin and chitodextrins.. The alpha subunit is a potent exochitinase. Along with the beta subunit it plays a role in the initial interaction of the toxin with sensitive cells and allow the gamma subunit (the active toxin) to gain entry into the cell. This chain is Killer toxin subunits alpha/beta, found in Kluyveromyces lactis (strain ATCC 8585 / CBS 2359 / DSM 70799 / NBRC 1267 / NRRL Y-1140 / WM37) (Yeast).